Here is a 421-residue protein sequence, read N- to C-terminus: UDP-N-acetylglucosamine 1-carboxyvinyltransferase (421 aa).

Lys22 to Asn23 is a phosphoenolpyruvate binding site. UDP-N-acetyl-alpha-D-glucosamine is bound at residue Arg93. The active-site Proton donor is the Cys117. The residue at position 117 (Cys117) is a 2-(S-cysteinyl)pyruvic acid O-phosphothioketal. Residues Arg122–Leu126, Asp308, and Ile330 each bind UDP-N-acetyl-alpha-D-glucosamine.

Belongs to the EPSP synthase family. MurA subfamily.

It localises to the cytoplasm. The enzyme catalyses phosphoenolpyruvate + UDP-N-acetyl-alpha-D-glucosamine = UDP-N-acetyl-3-O-(1-carboxyvinyl)-alpha-D-glucosamine + phosphate. The protein operates within cell wall biogenesis; peptidoglycan biosynthesis. Its function is as follows. Cell wall formation. Adds enolpyruvyl to UDP-N-acetylglucosamine. In Pseudomonas putida (strain W619), this protein is UDP-N-acetylglucosamine 1-carboxyvinyltransferase.